Consider the following 2038-residue polypeptide: HEAT repeat-containing protein 5A (2038 aa).

HEAT repeat units lie at residues 850 to 887 (EVRRLVLTLVLGALESPTPLLRCAASEAWARLAQVADD) and 1082 to 1119 (LLRRAVLACLRQLVQREAAEVSEHAIMLARDGRDAAAD). The tract at residues 1646-1668 (RSAEVDDGASEKETLPEFGEGKD) is disordered. Position 1647 is a phosphoserine (serine 1647).

Belongs to the HEATR5 family.

This chain is HEAT repeat-containing protein 5A (Heatr5a), found in Mus musculus (Mouse).